We begin with the raw amino-acid sequence, 154 residues long: Transcriptional repressor NrdR (154 aa).

A zinc finger spans residues 3–34 (CPTCKYNGTRVVDSRPADDGNSIRRRRECEKC). The 91-residue stretch at 49–139 (LIVVKKDGAR…VYRQFKDISV (91 aa)) folds into the ATP-cone domain.

The protein belongs to the NrdR family. Requires Zn(2+) as cofactor.

In terms of biological role, negatively regulates transcription of bacterial ribonucleotide reductase nrd genes and operons by binding to NrdR-boxes. The sequence is that of Transcriptional repressor NrdR from Listeria welshimeri serovar 6b (strain ATCC 35897 / DSM 20650 / CCUG 15529 / CIP 8149 / NCTC 11857 / SLCC 5334 / V8).